Here is a 457-residue protein sequence, read N- to C-terminus: Siroheme synthase (457 aa).

The segment at 1–204 is precorrin-2 dehydrogenase /sirohydrochlorin ferrochelatase; sequence MDHLPIFCQL…ADEKAVNATT (204 aa). Residues 22-23 and 43-44 each bind NAD(+); these read DV and LT. At S128 the chain carries Phosphoserine. The interval 216–457 is uroporphyrinogen-III C-methyltransferase; sequence GEVVLVGAGP…RDKLNWFSNY (242 aa). P225 contacts S-adenosyl-L-methionine. D248 (proton acceptor) is an active-site residue. K270 (proton donor) is an active-site residue. S-adenosyl-L-methionine is bound by residues 301 to 303, I306, 331 to 332, M382, and G411; these read GGD and TA.

It in the N-terminal section; belongs to the precorrin-2 dehydrogenase / sirohydrochlorin ferrochelatase family. The protein in the C-terminal section; belongs to the precorrin methyltransferase family.

The enzyme catalyses uroporphyrinogen III + 2 S-adenosyl-L-methionine = precorrin-2 + 2 S-adenosyl-L-homocysteine + H(+). It catalyses the reaction precorrin-2 + NAD(+) = sirohydrochlorin + NADH + 2 H(+). It carries out the reaction siroheme + 2 H(+) = sirohydrochlorin + Fe(2+). It functions in the pathway cofactor biosynthesis; adenosylcobalamin biosynthesis; precorrin-2 from uroporphyrinogen III: step 1/1. Its pathway is cofactor biosynthesis; adenosylcobalamin biosynthesis; sirohydrochlorin from precorrin-2: step 1/1. The protein operates within porphyrin-containing compound metabolism; siroheme biosynthesis; precorrin-2 from uroporphyrinogen III: step 1/1. It participates in porphyrin-containing compound metabolism; siroheme biosynthesis; siroheme from sirohydrochlorin: step 1/1. It functions in the pathway porphyrin-containing compound metabolism; siroheme biosynthesis; sirohydrochlorin from precorrin-2: step 1/1. Functionally, multifunctional enzyme that catalyzes the SAM-dependent methylations of uroporphyrinogen III at position C-2 and C-7 to form precorrin-2 via precorrin-1. Then it catalyzes the NAD-dependent ring dehydrogenation of precorrin-2 to yield sirohydrochlorin. Finally, it catalyzes the ferrochelation of sirohydrochlorin to yield siroheme. The chain is Siroheme synthase from Salmonella gallinarum (strain 287/91 / NCTC 13346).